A 357-amino-acid polypeptide reads, in one-letter code: Dihydroorotate dehydrogenase (quinone) (357 aa).

FMN contacts are provided by residues 61–65 (AGFDK) and T85. Residue K65 coordinates substrate. 110–114 (NRFGF) contributes to the substrate binding site. 2 residues coordinate FMN: N141 and N172. N172 contributes to the substrate binding site. S175 functions as the Nucleophile in the catalytic mechanism. N177 is a binding site for substrate. FMN is bound by residues K217 and G245. Residue 246 to 247 (NT) participates in substrate binding. Residues G268, G297, and 318–319 (YS) contribute to the FMN site.

This sequence belongs to the dihydroorotate dehydrogenase family. Type 2 subfamily. Monomer. The cofactor is FMN.

It localises to the cell membrane. The enzyme catalyses (S)-dihydroorotate + a quinone = orotate + a quinol. Its pathway is pyrimidine metabolism; UMP biosynthesis via de novo pathway; orotate from (S)-dihydroorotate (quinone route): step 1/1. In terms of biological role, catalyzes the conversion of dihydroorotate to orotate with quinone as electron acceptor. The polypeptide is Dihydroorotate dehydrogenase (quinone) (Xanthobacter autotrophicus (strain ATCC BAA-1158 / Py2)).